Reading from the N-terminus, the 172-residue chain is Shikimate kinase (172 aa).

Residue 11–16 coordinates ATP; sequence GCGKST. Serine 15 contributes to the Mg(2+) binding site. Substrate contacts are provided by aspartate 33, arginine 57, and glycine 80. Residue arginine 120 participates in ATP binding. A substrate-binding site is contributed by arginine 142. Arginine 158 is a binding site for ATP.

It belongs to the shikimate kinase family. In terms of assembly, monomer. The cofactor is Mg(2+).

It localises to the cytoplasm. It catalyses the reaction shikimate + ATP = 3-phosphoshikimate + ADP + H(+). Its pathway is metabolic intermediate biosynthesis; chorismate biosynthesis; chorismate from D-erythrose 4-phosphate and phosphoenolpyruvate: step 5/7. Its function is as follows. Catalyzes the specific phosphorylation of the 3-hydroxyl group of shikimic acid using ATP as a cosubstrate. The chain is Shikimate kinase from Flavobacterium johnsoniae (strain ATCC 17061 / DSM 2064 / JCM 8514 / BCRC 14874 / CCUG 350202 / NBRC 14942 / NCIMB 11054 / UW101) (Cytophaga johnsonae).